Consider the following 278-residue polypeptide: 4-deoxy-L-threo-5-hexosulose-uronate ketol-isomerase (278 aa).

Histidine 196, histidine 198, glutamate 203, and histidine 245 together coordinate Zn(2+).

The protein belongs to the KduI family. Zn(2+) is required as a cofactor.

The enzyme catalyses 5-dehydro-4-deoxy-D-glucuronate = 3-deoxy-D-glycero-2,5-hexodiulosonate. Its pathway is glycan metabolism; pectin degradation; 2-dehydro-3-deoxy-D-gluconate from pectin: step 4/5. In terms of biological role, catalyzes the isomerization of 5-dehydro-4-deoxy-D-glucuronate to 3-deoxy-D-glycero-2,5-hexodiulosonate. In Salmonella dublin (strain CT_02021853), this protein is 4-deoxy-L-threo-5-hexosulose-uronate ketol-isomerase.